Here is a 124-residue protein sequence, read N- to C-terminus: Trophoblast-specific protein alpha (124 aa).

Residues Met1 to Val18 form the signal peptide. Disordered regions lie at residues Lys51–Leu74 and Phe91–Gln124. Positions Glu62–Leu74 are enriched in polar residues. The segment covering Asp103–Glu112 has biased composition (acidic residues).

It localises to the secreted. The protein localises to the extracellular space. It may be a growth factor/hormone, perhaps involved in interaction between the maternal and fetal systems in maintenance of pregnancy. This Mus musculus (Mouse) protein is Trophoblast-specific protein alpha (Tpbpa).